The chain runs to 75 residues: ATP synthase subunit c (75 aa).

The next 2 helical transmembrane spans lie at 9–29 (IGAG…GIIF) and 54–74 (FALA…ILFA).

This sequence belongs to the ATPase C chain family. In terms of assembly, F-type ATPases have 2 components, F(1) - the catalytic core - and F(0) - the membrane proton channel. F(1) has five subunits: alpha(3), beta(3), gamma(1), delta(1), epsilon(1). F(0) has three main subunits: a(1), b(2) and c(10-14). The alpha and beta chains form an alternating ring which encloses part of the gamma chain. F(1) is attached to F(0) by a central stalk formed by the gamma and epsilon chains, while a peripheral stalk is formed by the delta and b chains.

Its subcellular location is the cell inner membrane. In terms of biological role, f(1)F(0) ATP synthase produces ATP from ADP in the presence of a proton or sodium gradient. F-type ATPases consist of two structural domains, F(1) containing the extramembraneous catalytic core and F(0) containing the membrane proton channel, linked together by a central stalk and a peripheral stalk. During catalysis, ATP synthesis in the catalytic domain of F(1) is coupled via a rotary mechanism of the central stalk subunits to proton translocation. Functionally, key component of the F(0) channel; it plays a direct role in translocation across the membrane. A homomeric c-ring of between 10-14 subunits forms the central stalk rotor element with the F(1) delta and epsilon subunits. This chain is ATP synthase subunit c, found in Pelagibacter ubique (strain HTCC1062).